Here is a 440-residue protein sequence, read N- to C-terminus: MPLQWFLKYRPKTLNEVENEEDAKKELVEWIESWLKGKPNYKAVLLYGPPGVGKTTLAEALARDYKLELFEMNASDSRNLNDIRTMAERASITGTIFGIKGKLILLDEVDGLNARADAGAIDAILELINKTKYPIILTANDPWDPSLRPLRNAVKMIELKRLTKYPLKRILKKICEAEKITCEDEALDFIIEQSEGDARYAINMLQGVAEGYGRVTLDMAKNLVRRKDRELDPFEALRGVFWAKYYWQAKSAVTDTQIDYELLMRWLDENIPLQYDNLEDVWRAYDALSRASLFLTRSKLVGWDLLSYTFDLMGPGIAFASLEKKKPTYKAKWVKYQFPQYIQQLAKTKEIRDALDTLLRKIGQAIHASKDKTLNDFLPAFIIYYRKYQEKLDKELELTEKEKDVIKLISSFYEGSKVEIEEPEKKEPSKRRTTSYRRKS.

48–55 (GPPGVGKT) lines the ATP pocket.

It belongs to the activator 1 small subunits family. RfcL subfamily. In terms of assembly, heteromultimer composed of small subunits (RfcS) and large subunits (RfcL).

Functionally, part of the RFC clamp loader complex which loads the PCNA sliding clamp onto DNA. In Sulfurisphaera tokodaii (strain DSM 16993 / JCM 10545 / NBRC 100140 / 7) (Sulfolobus tokodaii), this protein is Replication factor C large subunit.